We begin with the raw amino-acid sequence, 271 residues long: NADPH-dependent 7-cyano-7-deazaguanine reductase (271 aa).

81–83 (IES) lines the substrate pocket. 83–84 (SK) contributes to the NADPH binding site. C177 (thioimide intermediate) is an active-site residue. Residue D184 is the Proton donor of the active site. 216–217 (HE) contributes to the substrate binding site. Position 245–246 (245–246 (RG)) interacts with NADPH.

This sequence belongs to the GTP cyclohydrolase I family. QueF type 2 subfamily. Homodimer.

The protein resides in the cytoplasm. It carries out the reaction 7-aminomethyl-7-carbaguanine + 2 NADP(+) = 7-cyano-7-deazaguanine + 2 NADPH + 3 H(+). Its pathway is tRNA modification; tRNA-queuosine biosynthesis. Catalyzes the NADPH-dependent reduction of 7-cyano-7-deazaguanine (preQ0) to 7-aminomethyl-7-deazaguanine (preQ1). The chain is NADPH-dependent 7-cyano-7-deazaguanine reductase from Xanthomonas oryzae pv. oryzae (strain MAFF 311018).